The following is a 1353-amino-acid chain: Adenylate cyclase type 9 (1353 aa).

Disordered regions lie at residues 1 to 27 (MASS…DSNS) and 51 to 73 (SSSC…GGRL). Over 1 to 117 (MASSPHQQLL…CFPQTQRRFR (117 aa)) the chain is Cytoplasmic. Residues 16 to 27 (EVSCDSSGDSNS) are compositionally biased toward polar residues. Over residues 51–66 (SSSCSSSGDSGGLPRR) the composition is skewed to low complexity. Residues 118–138 (YALFYVGFACLLWSIYFAVHM) traverse the membrane as a helical segment. The Extracellular portion of the chain corresponds to 139 to 141 (KSK). Residues 142-162 (VIVMVVPALCFLVVCVGFFLF) traverse the membrane as a helical segment. Residues 163-171 (TFTKLYARH) are Cytoplasmic-facing. A helical transmembrane segment spans residues 172–192 (YAWTSLALTLLVFALTLAAQF). Topologically, residues 193 to 215 (QVWTPLSGRVDSSNHTLTATPAD) are extracellular. N-linked (GlcNAc...) asparagine glycosylation is present at Asn206. The chain crosses the membrane as a helical span at residues 216-235 (TCLSQVGSFSICIEVLLLLY). Topologically, residues 236–241 (TVMQLP) are cytoplasmic. The chain crosses the membrane as a helical span at residues 242 to 259 (LYLSLFLGVVYSVLFETF). The Extracellular portion of the chain corresponds to 260 to 280 (GYHFRNEDCYPSPGPGALHWE). A helical membrane pass occupies residues 281-301 (LLSRALLHVCIHAIGIHLFVM). Topologically, residues 302–786 (SQVRSRSTFL…VKTFASATFS (485 aa)) are cytoplasmic. A disordered region spans residues 349-375 (QGDEESENSVKRHATSSPKNRKKKSSI). The segment covering 359–374 (KRHATSSPKNRKKKSS) has biased composition (basic residues). Asp399, Ile400, and Asp443 together coordinate Mg(2+). Residues 399–404 (DIVGFT), 441–443 (LGD), and Arg487 each bind ATP. Disordered stretches follow at residues 596 to 615 (DSRE…GSVS) and 641 to 685 (SEAG…EEKL). Phosphoserine is present on residues Ser610 and Ser613. Positions 661 to 676 (STKASGGPNSKTQNGL) are enriched in polar residues. Phosphoserine is present on residues Ser688, Ser691, and Ser706. A helical transmembrane segment spans residues 787-807 (SLLDVFLSTTVFLILSITCFL). The Extracellular segment spans residues 808-818 (KYGATATPPPP). Residues 819-839 (AALAVFGADLLLEVLSLIVSI) traverse the membrane as a helical segment. Residues 840 to 867 (RMVFFLEDVMTCTKWLLEWIAGWLPRHC) lie on the Cytoplasmic side of the membrane. The helical transmembrane segment at 868-888 (IGAILVSLPALAVYSHITSEF) threads the bilayer. The Extracellular portion of the chain corresponds to 889-891 (ETN). A helical transmembrane segment spans residues 892–912 (IHVTMFTGSAVLVAVVHYCNF). The Cytoplasmic segment spans residues 913-920 (CQLSSWMR). The helical transmembrane segment at 921 to 941 (SSLATIVGAGLLLLLHISLCQ) threads the bilayer. Residues 942–975 (DSSIVMSPLDSAQNFSAQRNPCNSSVLQDGRRPA) lie on the Extracellular side of the membrane. N-linked (GlcNAc...) asparagine glycans are attached at residues Asn955 and Asn964. A helical membrane pass occupies residues 976–996 (SLIGKELILTFFLLLLLVWFL). Topologically, residues 997–1353 (NREFEVSYRL…LSKLNVSKSV (357 aa)) are cytoplasmic. ATP contacts are provided by residues Lys1108, 1185–1187 (DIW), 1192–1196 (NIASR), and Lys1232. Ser1257, Ser1259, Ser1295, Ser1307, and Ser1332 each carry phosphoserine. The tract at residues 1290–1314 (KASLGSDDSTQAKEARLSSKRSWRE) is disordered. The span at 1299–1314 (TQAKEARLSSKRSWRE) shows a compositional bias: basic and acidic residues.

This sequence belongs to the adenylyl cyclase class-4/guanylyl cyclase family. Mg(2+) is required as a cofactor. Mn(2+) serves as cofactor. Detected in brain, spleen, lung, liver and testis (at protein level). Detected in brain, especially in hippocampus, cerebellum and neocortex. Found in decreasing order in skeletal muscle, heart, adrenal gland, ovary and brain; and to a lesser extent, in kidney, liver, testis, lung, thymus and spleen.

It is found in the cell membrane. It catalyses the reaction ATP = 3',5'-cyclic AMP + diphosphate. Insensitive to calcium/calmodulin, forskolin and somatostatin. Stimulated by beta-adrenergic receptor activation. Activity is down-regulated by calcium/calcineurin. Functionally, adenylyl cyclase that catalyzes the formation of the signaling molecule cAMP in response to activation of G protein-coupled receptors. Contributes to signaling cascades activated by CRH (corticotropin-releasing factor), corticosteroids and by beta-adrenergic receptors. The sequence is that of Adenylate cyclase type 9 (Adcy9) from Mus musculus (Mouse).